The sequence spans 59 residues: MGYSVIVDSDKCIGCGECVDVCPVEVYELQNGKAVPVNEEECLGCESCIEVCPQNAIVE.

2 consecutive 4Fe-4S ferredoxin-type domains span residues Tyr3–Gly32 and Lys33–Glu59. Cys12, Cys15, Cys18, Cys22, Cys42, Cys45, Cys48, and Cys52 together coordinate [4Fe-4S] cluster.

In terms of assembly, homodimer. The cofactor is [4Fe-4S] cluster.

The protein resides in the periplasm. Its function is as follows. Ferredoxins are iron-sulfur proteins that transfer electrons in a wide variety of metabolic reactions. The chain is Ferredoxin-2 from Desulfomicrobium norvegicum (strain DSM 1741 / NCIMB 8310) (Desulfovibrio baculatus (strain Norway 4)).